The primary structure comprises 279 residues: Undecaprenyl-diphosphatase (279 aa).

Helical transmembrane passes span 17–37 (TEFLPVSSTGHLFLFSYFFPF), 46–66 (AFEDLFDIFIQTGAILSVVVL), 92–112 (FQFYLNLIVGILPILILGFLL), 123–143 (SDLLLILGMSWFVGGIIMVFV), 156–176 (IGFKESIIVGFLQCFALIPGV), 197–217 (AEFSFFLAIPVLTLAGIYKLY), 226–246 (ETIGLLLFGSIISFIICYFII), and 257–277 (SFISFGVYRILLGLLVILYFV).

Belongs to the UppP family.

The protein resides in the cell inner membrane. It catalyses the reaction di-trans,octa-cis-undecaprenyl diphosphate + H2O = di-trans,octa-cis-undecaprenyl phosphate + phosphate + H(+). Functionally, catalyzes the dephosphorylation of undecaprenyl diphosphate (UPP). Confers resistance to bacitracin. This is Undecaprenyl-diphosphatase from Leptospira biflexa serovar Patoc (strain Patoc 1 / ATCC 23582 / Paris).